A 66-amino-acid chain; its full sequence is Small ribosomal subunit protein bS21 (66 aa).

Belongs to the bacterial ribosomal protein bS21 family.

The protein is Small ribosomal subunit protein bS21 of Bdellovibrio bacteriovorus (strain ATCC 15356 / DSM 50701 / NCIMB 9529 / HD100).